The following is a 172-amino-acid chain: NADH-quinone oxidoreductase subunit B (172 aa).

[4Fe-4S] cluster contacts are provided by Cys-46, Cys-47, Cys-111, and Cys-141.

This sequence belongs to the complex I 20 kDa subunit family. As to quaternary structure, NDH-1 is composed of 14 different subunits. Subunits NuoB, C, D, E, F, and G constitute the peripheral sector of the complex. [4Fe-4S] cluster serves as cofactor.

The protein resides in the cell membrane. The catalysed reaction is a quinone + NADH + 5 H(+)(in) = a quinol + NAD(+) + 4 H(+)(out). Its function is as follows. NDH-1 shuttles electrons from NADH, via FMN and iron-sulfur (Fe-S) centers, to quinones in the respiratory chain. The immediate electron acceptor for the enzyme in this species is believed to be a menaquinone. Couples the redox reaction to proton translocation (for every two electrons transferred, four hydrogen ions are translocated across the cytoplasmic membrane), and thus conserves the redox energy in a proton gradient. This is NADH-quinone oxidoreductase subunit B from Bacillus anthracis (strain A0248).